A 131-amino-acid polypeptide reads, in one-letter code: Synaptobrevin-like protein (131 aa).

Over 1–81 the chain is Cytoplasmic; the sequence is MLHITTMTDK…KRKFWWKNCK (81 aa). One can recognise a v-SNARE coiled-coil homology domain in the interval 18 to 78; that stretch reads RLQQTQAQVN…GKLKRKFWWK (61 aa). A helical; Anchor for type IV membrane protein membrane pass occupies residues 82-102; the sequence is MLAVLGVLVVILIIVLIVWVV. Residues 103–131 lie on the Vesicular side of the membrane; the sequence is SEQKNKVEQSEHSSHHLVMDNSSHLLSEQ. Residues 112-131 are disordered; the sequence is SEHSSHHLVMDNSSHLLSEQ. Residues 122-131 are compositionally biased toward polar residues; sequence DNSSHLLSEQ.

This sequence belongs to the synaptobrevin family.

The protein resides in the cytoplasmic vesicle. It localises to the secretory vesicle. The protein localises to the synaptic vesicle membrane. Its subcellular location is the synapse. It is found in the synaptosome. Functionally, unknown, but synaptobrevins are presumed to be involved in targeting and fusion of synaptic vesicles with the presynaptic membrane as well as in neurotransmitter release. The chain is Synaptobrevin-like protein from Schistosoma mansoni (Blood fluke).